The following is a 586-amino-acid chain: MTVEEVGDDYTKDGTVDLRGNRVRRSQTGRWKACSFVVVYEVFERMAYYGISSNLVIYMTTKLHQGTVKSSNNVTNWVGTSWLTPILGAYVADAHFGRYITFVISSAIYLLGMALLTLSVSLPGLKPPKCSTANVENCEKASVIQLAVFFGALYTLAIGTGGTKPNISTIGADQFDEFDPKDKIHKHSFFNWWMFSIFFGTFFATTVLVYVQDNVGWAIGYGLSTLGLAFSIFIFLLGTRLYRHKLPMGSPFTKMARVIVASLRKAREPMSSDSTRFYELPPMEYASKRAFPIHSTSSLRFLNRASLKTGSTHKWRLCTITEVEETKQMLKMLPVLFVTFVPSMMLAQIMTLFIKQGTTLDRRLTNNFSIPPASLLGFTTFSMLVSIVIYDRVFVKFMRKLTGNPRGITLLQRMGIGMILHILIMIIASITERYRLKVAAEHGLTHQTAVPIPLSIFTLLPQYVLMGLADAFIEIAKLEFFYDQAPESMKSLGTSYTSTSMAVGYFMSSILLSSVSQITKKQGRGWIQNNLNESRLDNYYMFFAVLNLLNFILFLVVIRFYEYRADVTQSANVEQKEPNMVDNYNE.

The next 11 membrane-spanning stretches (helical) occupy residues 77 to 97 (WVGTSWLTPILGAYVADAHFG), 100 to 120 (ITFVISSAIYLLGMALLTLSV), 141 to 161 (ASVIQLAVFFGALYTLAIGTG), 189 to 209 (FFNWWMFSIFFGTFFATTVLV), 217 to 237 (WAIGYGLSTLGLAFSIFIFLL), 334 to 354 (PVLFVTFVPSMMLAQIMTLFI), 370 to 390 (IPPASLLGFTTFSMLVSIVIY), 408 to 428 (ITLLQRMGIGMILHILIMIIA), 449 to 469 (AVPIPLSIFTLLPQYVLMGLA), 492 to 512 (LGTSYTSTSMAVGYFMSSILL), and 538 to 558 (NYYMFFAVLNLLNFILFLVVI).

The protein belongs to the major facilitator superfamily. Proton-dependent oligopeptide transporter (POT/PTR) (TC 2.A.17) family. As to expression, expressed in roots and siliques.

Its subcellular location is the membrane. Peptide transporter. The polypeptide is Protein NRT1/ PTR FAMILY 5.3 (NPF5.3) (Arabidopsis thaliana (Mouse-ear cress)).